We begin with the raw amino-acid sequence, 301 residues long: Small ribosomal subunit biogenesis GTPase RsgA (301 aa).

In terms of domain architecture, CP-type G spans 65-224; the sequence is YNQLIRPKVA…LVDTPGFGNL (160 aa). Residues 115-118 and 167-175 each bind GTP; these read SKYD and GNSGVGKST. Residues Cys247, Cys252, His254, and Cys260 each contribute to the Zn(2+) site.

Belongs to the TRAFAC class YlqF/YawG GTPase family. RsgA subfamily. As to quaternary structure, monomer. Associates with 30S ribosomal subunit, binds 16S rRNA. Zn(2+) is required as a cofactor.

It is found in the cytoplasm. Its function is as follows. One of several proteins that assist in the late maturation steps of the functional core of the 30S ribosomal subunit. Helps release RbfA from mature subunits. May play a role in the assembly of ribosomal proteins into the subunit. Circularly permuted GTPase that catalyzes slow GTP hydrolysis, GTPase activity is stimulated by the 30S ribosomal subunit. This is Small ribosomal subunit biogenesis GTPase RsgA from Ureaplasma urealyticum serovar 10 (strain ATCC 33699 / Western).